We begin with the raw amino-acid sequence, 500 residues long: E3 ubiquitin-protein ligase TRIM69 (500 aa).

A necessary for nuclear localization region spans residues 1-152; it reads MEVSTNPSSN…SVGQSKEFLQ (152 aa). An RING-type zinc finger spans residues 41 to 82; it reads CPLCNDWFRDPLMLSCGHNFCEACIQDFWRLQAKETFCPECK. Residues 161 to 255 adopt a coiled-coil conformation; the sequence is TEELAIQQGQ…QCLLAKDMLV (95 aa). The B30.2/SPRY domain maps to 305-500; that stretch reads PIQYMVWREM…KEPLHILHPQ (196 aa). Ser-341 is subject to Phosphoserine.

It belongs to the TRIM/RBCC family. In terms of assembly, homo-multimer; required for antiviral activity. Interacts with PML. In terms of processing, phosphorylated. Phosphorylation is necessary for nuclear localization.

The protein localises to the cytoplasm. It localises to the nucleus. The protein resides in the nucleus speckle. Its subcellular location is the cytoskeleton. It is found in the microtubule organizing center. The protein localises to the centrosome. The catalysed reaction is S-ubiquitinyl-[E2 ubiquitin-conjugating enzyme]-L-cysteine + [acceptor protein]-L-lysine = [E2 ubiquitin-conjugating enzyme]-L-cysteine + N(6)-ubiquitinyl-[acceptor protein]-L-lysine.. The protein operates within protein modification; protein ubiquitination. Functionally, E3 ubiquitin ligase that plays an important role in antiviral immunity by restricting different viral infections including dengue virus or vesicular stomatitis indiana virus. Ubiquitinates viral proteins such as dengue virus NS3 thereby limiting infection. In addition, acts as a key mediator of type I interferon induced microtubule stabilization by directly associating to microtubules independently of its E3 ligase activity. Also plays a role in cataract formation together with TP53. Mechanistically, inhibits UVB-induced cell apoptosis and reactive oxygen species (ROS) production by inducing TP53 ubiquitination. Regulates centrosome dynamics and mitotic progression by ubiquitinating STK3/MST2; leading to its redistribution to the perinuclear cytoskeleton and subsequent phosphorylation by PLK1. The protein is E3 ubiquitin-protein ligase TRIM69 (TRIM69) of Homo sapiens (Human).